The chain runs to 906 residues: ATP-dependent DNA helicase PIF1 (906 aa).

Disordered regions lie at residues 77–146 (DSEI…SSTF) and 229–297 (LEGS…PFKV). Over residues 78–87 (SEIKESDDLS) the composition is skewed to basic and acidic residues. Residues 88–119 (KGQSHVYNGSPVTKNSILQIEKQQIQKSPRPT) are compositionally biased toward polar residues. Residues 120 to 132 (ETNKRMQIRKDPD) are compositionally biased toward basic and acidic residues. A compositionally biased stretch (polar residues) spans 234 to 261 (NKVQADNASPFRITSSFSSPSQIQNQGV). A compositionally biased stretch (low complexity) spans 273 to 291 (QNVSSASQSSSPPMTVSQV). 390 to 397 (GSAGTGKS) is an ATP binding site. A DNA-binding region spans residues 840–859 (QAYVALSRAVSRAGLQVLNF).

This sequence belongs to the helicase family. PIF1 subfamily. Monomer. Interacts with telomerase. The cofactor is Mg(2+).

Its subcellular location is the nucleus. The protein resides in the mitochondrion. It carries out the reaction Couples ATP hydrolysis with the unwinding of duplex DNA at the replication fork by translocating in the 5'-3' direction. This creates two antiparallel DNA single strands (ssDNA). The leading ssDNA polymer is the template for DNA polymerase III holoenzyme which synthesizes a continuous strand.. The catalysed reaction is ATP + H2O = ADP + phosphate + H(+). DNA-dependent ATPase and 5'-3' DNA helicase required for the maintenance of both mitochondrial and nuclear genome stability. Efficiently unwinds G-quadruplex (G4) DNA structures and forked RNA-DNA hybrids. Resolves G4 structures, preventing replication pausing and double-strand breaks (DSBs) at G4 motifs. Involved in the maintenance of telomeric DNA. Inhibits telomere elongation, de novo telomere formation and telomere addition to DSBs via catalytic inhibition of telomerase. Reduces the processivity of telomerase by displacing active telomerase from DNA ends. Releases telomerase by unwinding the short telomerase RNA/telomeric DNA hybrid that is the intermediate in the telomerase reaction. Involved in the maintenance of ribosomal (rDNA). Required for efficient fork arrest at the replication fork barrier within rDNA. Involved in the maintenance of mitochondrial (mtDNA). Required to maintain mtDNA under conditions that introduce dsDNA breaks in mtDNA, either preventing or repairing dsDNA breaks. May inhibit replication progression to allow time for repair. May have a general role in chromosomal replication by affecting Okazaki fragment maturation. May have a role in conjunction with DNA2 helicase/nuclease in 5'-flap extension during Okazaki fragment processing. This is ATP-dependent DNA helicase PIF1 from Candida albicans (strain SC5314 / ATCC MYA-2876) (Yeast).